The primary structure comprises 318 residues: Lysophospholipase D GDPD3 (318 aa).

At 1–2 (MS) the chain is on the cytoplasmic side. Residues 3-23 (LLLYYALPALGSYAMLSIFFL) traverse the membrane as a helical segment. Residues 24–198 (RRPHLLHTPR…KAANPEMPLS (175 aa)) are Extracellular-facing. One can recognise a GP-PDE domain in the interval 39–308 (IRLGAHRGGS…DYPTALRHYL (270 aa)). 3 residues coordinate a divalent metal cation: Glu71, Asp73, and His86. A helical membrane pass occupies residues 199-221 (FTISRGFWVLLSYYLGLLPFIPI). Topologically, residues 222 to 318 (PEKFFFCFLP…DNHGPAARTS (97 aa)) are cytoplasmic.

This sequence belongs to the glycerophosphoryl diester phosphodiesterase family. In terms of tissue distribution, widely expressed, with high level in kidney and ovary.

The protein resides in the membrane. It is found in the cytoplasm. Its subcellular location is the perinuclear region. It localises to the endoplasmic reticulum. The enzyme catalyses 1-hexadecanoyl-sn-glycero-3-phosphocholine + H2O = 1-hexadecanoyl-sn-glycero-3-phosphate + choline + H(+). The catalysed reaction is 1-hexadecanoyl-sn-glycero-3-phosphocholine + H2O = sn-glycerol 3-phosphocholine + hexadecanoate + H(+). It carries out the reaction 1-O-(1Z-octadecenyl)-sn-glycero-3-phospho-N-hexadecanoyl-ethanolamine + H2O = 1-O-(1Z-octadecenyl)-sn-glycero-3-phosphate + N-hexadecanoylethanolamine + H(+). It catalyses the reaction N-(5Z,8Z,11Z,14Z-eicosatetraenoyl)-1-(9Z-octadecenoyl)-sn-glycero-3-phosphoethanolamine + H2O = N-(5Z,8Z,11Z,14Z-eicosatetraenoyl)-ethanolamine + 1-(9Z-octadecenoyl)-sn-glycero-3-phosphate + H(+). The enzyme catalyses N,1-di-(9Z-octadecenoyl)-sn-glycero-3-phosphoethanolamine + H2O = N-(9Z-octadecenoyl) ethanolamine + 1-(9Z-octadecenoyl)-sn-glycero-3-phosphate + H(+). The catalysed reaction is N-hexadecanoyl-1-(9Z-octadecenoyl)-sn-glycero-3-phosphoethanolamine + H2O = N-hexadecanoylethanolamine + 1-(9Z-octadecenoyl)-sn-glycero-3-phosphate + H(+). It carries out the reaction 1-O-hexadecyl-sn-glycero-3-phosphocholine + H2O = 1-O-hexadecyl-sn-glycero-3-phosphate + choline + H(+). With respect to regulation, lysophospholipase D activity is stimulated by calcium. Loss of lysophospholipase D activity in presence of EDTA. Functionally, hydrolyzes lysoglycerophospholipids to produce lysophosphatidic acid (LPA) and the corresponding amines. Shows a preference for 1-O-alkyl-sn-glycero-3-phosphocholine (lyso-PAF), lysophosphatidylcholine (lyso-PC) and N-acylethanolamine lysophospholipids. Does not display glycerophosphodiester phosphodiesterase activity, since it cannot hydrolyze either glycerophosphoinositol or glycerophosphocholine. This chain is Lysophospholipase D GDPD3, found in Homo sapiens (Human).